Reading from the N-terminus, the 213-residue chain is HTH-type transcriptional regulator SrpR (213 aa).

An HTH tetR-type domain is found at 10 to 70 (EETRQRIIDA…AVLASRQHPL (61 aa)). A DNA-binding region (H-T-H motif) is located at residues 33–52 (TLDQIARKAGVTRGAVYWHF).

In terms of biological role, in conjunction with SrpS represses the srpABC operon. This is HTH-type transcriptional regulator SrpR (srpR) from Pseudomonas putida (Arthrobacter siderocapsulatus).